The primary structure comprises 282 residues: Glycine/sarcosine N-methyltransferase (282 aa).

Residues 1 to 23 are compositionally biased toward polar residues; it reads MTSTQNHPLQTQDDQQRFGQSPE. The interval 1–27 is disordered; the sequence is MTSTQNHPLQTQDDQQRFGQSPESVRE. S-adenosyl-L-methionine contacts are provided by residues Y35, W43, R52, A76, D97, 123-124, and L141; that span reads DW. Substrate contacts are provided by N143, R176, and Y217.

This sequence belongs to the class I-like SAM-binding methyltransferase superfamily. Glycine N-methyltransferase family. As to quaternary structure, monomer.

The catalysed reaction is glycine + 2 S-adenosyl-L-methionine = N,N-dimethylglycine + 2 S-adenosyl-L-homocysteine + 2 H(+). It carries out the reaction glycine + S-adenosyl-L-methionine = sarcosine + S-adenosyl-L-homocysteine + H(+). The enzyme catalyses sarcosine + S-adenosyl-L-methionine = N,N-dimethylglycine + S-adenosyl-L-homocysteine + H(+). The protein operates within amine and polyamine biosynthesis; betaine biosynthesis via glycine pathway; betaine from glycine: step 1/3. Its pathway is amine and polyamine biosynthesis; betaine biosynthesis via glycine pathway; betaine from glycine: step 2/3. In terms of biological role, catalyzes the methylation of glycine and sarcosine to sarcosine and dimethylglycine, respectively, with S-adenosylmethionine (AdoMet) acting as the methyl donor. It has strict specificity for glycine and sarcosine as the methyl group acceptors. This chain is Glycine/sarcosine N-methyltransferase, found in Parasynechococcus marenigrum (strain WH8102).